We begin with the raw amino-acid sequence, 346 residues long: Very-long-chain 3-oxoacyl-CoA reductase (346 aa).

Residues Ala23–Ser43 form a helical membrane-spanning segment. Residues Val69, Asp123, Asn150, Tyr222, Lys226, Val255, and Ser257 each coordinate NADP(+). The active-site Proton donor is the Tyr222. Lys226 (lowers pKa of active site Tyr) is an active-site residue.

Belongs to the short-chain dehydrogenases/reductases (SDR) family.

It localises to the endoplasmic reticulum membrane. It catalyses the reaction a very-long-chain (3R)-3-hydroxyacyl-CoA + NADP(+) = a very-long-chain 3-oxoacyl-CoA + NADPH + H(+). Its pathway is lipid metabolism; fatty acid biosynthesis. Functionally, component of the microsomal membrane bound fatty acid elongation system, which produces the 26-carbon very long-chain fatty acids (VLCFA) from palmitate. Catalyzes the reduction of the 3-ketoacyl-CoA intermediate that is formed in each cycle of fatty acid elongation. VLCFAs serve as precursors for ceramide and sphingolipids. The chain is Very-long-chain 3-oxoacyl-CoA reductase from Kluyveromyces lactis (strain ATCC 8585 / CBS 2359 / DSM 70799 / NBRC 1267 / NRRL Y-1140 / WM37) (Yeast).